We begin with the raw amino-acid sequence, 231 residues long: 5'-methylthioadenosine/S-adenosylhomocysteine nucleosidase (231 aa).

E13 acts as the Proton acceptor in catalysis. Substrate is bound by residues G79, M153, and 174–175 (ME). The Proton donor role is filled by D198.

Belongs to the PNP/UDP phosphorylase family. MtnN subfamily.

The catalysed reaction is S-adenosyl-L-homocysteine + H2O = S-(5-deoxy-D-ribos-5-yl)-L-homocysteine + adenine. It carries out the reaction S-methyl-5'-thioadenosine + H2O = 5-(methylsulfanyl)-D-ribose + adenine. The enzyme catalyses 5'-deoxyadenosine + H2O = 5-deoxy-D-ribose + adenine. Its pathway is amino-acid biosynthesis; L-methionine biosynthesis via salvage pathway; S-methyl-5-thio-alpha-D-ribose 1-phosphate from S-methyl-5'-thioadenosine (hydrolase route): step 1/2. Its function is as follows. Catalyzes the irreversible cleavage of the glycosidic bond in both 5'-methylthioadenosine (MTA) and S-adenosylhomocysteine (SAH/AdoHcy) to adenine and the corresponding thioribose, 5'-methylthioribose and S-ribosylhomocysteine, respectively. Also cleaves 5'-deoxyadenosine, a toxic by-product of radical S-adenosylmethionine (SAM) enzymes, into 5-deoxyribose and adenine. The protein is 5'-methylthioadenosine/S-adenosylhomocysteine nucleosidase of Halalkalibacterium halodurans (strain ATCC BAA-125 / DSM 18197 / FERM 7344 / JCM 9153 / C-125) (Bacillus halodurans).